An 887-amino-acid chain; its full sequence is PAN2-PAN3 deadenylation complex subunit PAN3 (887 aa).

The segment at 43 to 71 (GVKLKYCRYYAKDKTCFYGEECQFLHEDP) adopts a C3H1-type zinc-finger fold. 3 disordered regions span residues 102–147 (AVAG…IPGM), 284–307 (QTPN…SNVS), and 325–392 (SPAT…SGQV). Gly residues predominate over residues 122–138 (PGTGAAAGGGGSSGGLD). Residues 147–498 (MDGGALTDTS…PPPNRIQKSS (352 aa)) are necessary and sufficient for interaction with PABPC1 but not needed for interaction with PAN2. The PABPC-interacting motif-2 (PAM-2) motif lies at 284-299 (QTPNPTASEFIPKGGS). The segment covering 298-307 (GSTSRLSNVS) has biased composition (polar residues). Phosphoserine is present on residues Ser-354 and Ser-361. The span at 363-392 (TPNPASYMVPSSASTSVNNPVSQTPSSGQV) shows a compositional bias: polar residues. Positions 463 to 750 (QIDQADMPAV…SVNDIMPMIG (288 aa)) are pseudokinase domain. ATP is bound by residues Arg-521, 570–577 (DFHAGGET), and 644–645 (TK). The stretch at 751–789 (ARFYTQLDAAQMRNDVIEEDLAKEVQNGRLFRLLAKLGT) forms a coiled coil. The interval 790-887 (INERPEFQKD…ELIAAANGQL (98 aa)) is knob domain.

The protein belongs to the protein kinase superfamily. PAN3 family. As to quaternary structure, homodimer. Forms a heterotrimer with a catalytic subunit PAN2 to form the poly(A)-nuclease (PAN) deadenylation complex. Interacts (via PAM-2 motif) with poly(A)-binding protein PABPC1 (via PABC domain), conferring substrate specificity of the enzyme complex. Interacts with the GW182 family proteins TNRC6A, TNRC6B and TNRC6. Interacts with YTHDF3. In terms of assembly, interacts with PAN2. Interacts (via N-terminus) with PABPC1 at lower efficiency than isoform 3. Interacts with PAN2. Interacts (via N-terminus) with PABPC1 at higher efficiency than isoform 1.

The protein resides in the cytoplasm. It localises to the P-body. The protein localises to the nucleus. Functionally, regulatory subunit of the poly(A)-nuclease (PAN) deadenylation complex, one of two cytoplasmic mRNA deadenylases involved in general and miRNA-mediated mRNA turnover. PAN specifically shortens poly(A) tails of RNA and the activity is stimulated by poly(A)-binding protein (PABP). PAN deadenylation is followed by rapid degradation of the shortened mRNA tails by the CCR4-NOT complex. Deadenylated mRNAs are then degraded by two alternative mechanisms, namely exosome-mediated 3'-5' exonucleolytic degradation, or deadenylation-dependent mRNA decapping and subsequent 5'-3' exonucleolytic degradation by XRN1. PAN3 acts as a regulator for PAN activity, recruiting the catalytic subunit PAN2 to mRNA via its interaction with RNA and PABP, and to miRNA targets via its interaction with GW182 family proteins. In terms of biological role, decreases PAN2-mediated deadenylation, possibly by preventing progression into the second CCR4-NOT mediated stage of biphasic deadenylation. Has a significant effect on mRNA stability, generally stabilizing a subset of the transcriptome. Stabilizes mRNAs degraded by the AU-rich element (ARE)-mediated mRNA decay pathway but promotes degradation of mRNAs by the microRNA-mediated pathway. Its activity influences mRNP remodeling, specifically reducing formation of a subset of P-bodies containing GW220, an isoform of TNRC6A. Its function is as follows. Enhances PAN2 deadenylase activity and has an extensive effect on mRNA stability, generally enhancing mRNA decay across the transcriptome by multiple pathways, including the AU-rich element (ARE)-mediated pathway, microRNA-mediated pathway and the nonsense-mediated pathway (NMD). Its activity is required for efficient P-body formation. May be involved in regulating mRNAs of genes involved in cell cycle progression and cell proliferation. This chain is PAN2-PAN3 deadenylation complex subunit PAN3, found in Homo sapiens (Human).